A 99-amino-acid chain; its full sequence is C-C motif chemokine 17 (99 aa).

A signal peptide spans 1–23; the sequence is MMSLKLLLLVMLLLGASLQVTHA. 2 disulfides stabilise this stretch: Cys-33/Cys-57 and Cys-34/Cys-73.

It belongs to the intercrine beta (chemokine CC) family. In terms of tissue distribution, expressed in thymus and also in spleen, lung, lymph node, kidney, small intestine, colon and skin.

It localises to the secreted. In terms of biological role, chemokine, which displays chemotactic activity for T lymphocytes, preferentially Th2 cells, but not monocytes or granulocytes. Therefore plays an important role in a wide range of inflammatory and immunological processes. Acts by binding to CCR4 at T-cell surface. Mediates GM-CSF/CSF2-driven pain and inflammation. In the brain, required to maintain the typical, highly branched morphology of hippocampal microglia under homeostatic conditions. May be important for the appropriate adaptation of microglial morphology and synaptic plasticity to acute lipopolysaccharide (LPS)-induced neuroinflammation. Plays a role in wound healing, mainly by inducing fibroblast migration into the wound. This is C-C motif chemokine 17 (CCL17) from Felis catus (Cat).